The chain runs to 161 residues: Small heat shock protein hspJ (161 aa).

The region spanning 52 to 161 (SKFTSLNPKL…FEKEIKINIE (110 aa)) is the sHSP domain.

This sequence belongs to the small heat shock protein (HSP20) family.

The protein is Small heat shock protein hspJ (hspJ) of Dictyostelium discoideum (Social amoeba).